A 164-amino-acid polypeptide reads, in one-letter code: Pheromone-binding protein (164 aa).

Positions 1-22 (MSIQGQIALALMVNMAVGSVDA) are cleaved as a signal peptide. 3 disulfide bridges follow: Cys-41–Cys-76, Cys-72–Cys-130, and Cys-119–Cys-139.

This sequence belongs to the PBP/GOBP family. In terms of assembly, homodimer. As to expression, antenna.

Functionally, this major soluble protein in olfactory sensilla of male moths serves to solubilize the extremely hydrophobic pheromone molecules such as bombykol and to transport pheromone through the aqueous lymph to receptors located on olfactory cilia. In Bombyx mori (Silk moth), this protein is Pheromone-binding protein.